Consider the following 1823-residue polypeptide: AF4/FMR2 family member lilli (1823 aa).

The segment covering 1–41 (MAQQQQQQHQQQQHHQQQQQQLQQQQQLLQYNNNSYNLNYN) has biased composition (low complexity). Disordered regions lie at residues 1–87 (MAQQ…DPEI), 126–305 (GFGS…ENHI), 422–544 (QQLT…KKKY), 570–626 (AGPG…WHLS), 686–712 (DSRH…YGVG), 753–1057 (PKNQ…DIPT), 1071–1287 (AAAQ…LKPR), 1322–1350 (ARQH…GART), 1413–1448 (FMLK…AEQL), 1480–1531 (ENSA…AIAS), 1547–1567 (TCSE…APRL), and 1715–1744 (GNTP…IVPQ). Residues 53 to 79 (REKYERQQGIQSDDRETSLFGEPRRLN) are compositionally biased toward basic and acidic residues. Composition is skewed to low complexity over residues 126-147 (GFGS…SSAS), 156-174 (QQQQ…QQQQ), and 205-249 (PSSS…TSSP). A compositionally biased stretch (pro residues) spans 426-438 (PTPPKASPTPPVI). T434 is modified (phosphothreonine). Over residues 441–454 (LKTEKNHSLEKQDS) the composition is skewed to basic and acidic residues. Residues 456–466 (LENDLELSESD) are compositionally biased toward acidic residues. Phosphoserine is present on residues S463 and S465. Residues 475 to 531 (SAGNSSNSSESDSSESGSEASSKGDPQQQQQQQQQHLLHQQQQHQQQQLLLQQQQQQ) are compositionally biased toward low complexity. A compositionally biased stretch (gly residues) spans 582–598 (AAGGVGSGSGSTGGGSS). Low complexity predominate over residues 599–612 (SSGMGTMSSSNSSN). The segment covering 764 to 785 (SDSGSGSSGSGSSSSDSAGGSS) has biased composition (low complexity). Polar residues predominate over residues 818–827 (HKAQPNSVTL). Over residues 839–849 (PRQKKPRKKKM) the composition is skewed to basic residues. S859 and S860 each carry phosphoserine. Low complexity-rich tracts occupy residues 877–906 (AATA…AAPA), 917–947 (QAQQ…SSQA), 962–979 (GTAS…VAAG), 1002–1057 (AAMA…DIPT), and 1102–1161 (NSSN…QLLQ). The segment at residues 908 to 920 (KKGRGRPRKQAQQ) is a DNA-binding region (a.T hook). S939 and S941 each carry phosphoserine. Residues 1172-1181 (TLKQSAQQRL) are compositionally biased toward polar residues. 2 stretches are compositionally biased toward low complexity: residues 1182-1203 (SSSD…ASSS) and 1253-1280 (QQQQ…QQQQ). Polar residues predominate over residues 1334–1344 (TQQNGHLSSRS). Positions 1480-1496 (ENSANASPNKLQQQNAR) are enriched in polar residues. Phosphoserine is present on S1486. The span at 1497–1531 (QLPLSQSQLQHQHQHQHQLQQQQSQSTATGHAIAS) shows a compositional bias: low complexity. The segment covering 1555–1565 (TPPPAAPPPAP) has biased composition (pro residues). Residues 1715–1735 (GNTPSSISPSNSVGSQGSGSN) show a composition bias toward low complexity.

It belongs to the AF4 family.

It localises to the nucleus. In terms of biological role, has a role in transcriptional regulation. Acts in parallel with the Ras/MAPK and the PI3K/PKB pathways in the control of cell identity and cellular growth. Essential for regulation of the cytoskeleton and cell growth but not for cell proliferation or growth rate. Required specifically for the microtubule-based basal transport of lipid droplets. Plays a partially redundant function downstream of Raf in cell fate specification in the developing eye. Pair-rule protein that regulates embryonic cellularization, gastrulation and segmentation. This chain is AF4/FMR2 family member lilli, found in Drosophila virilis (Fruit fly).